Reading from the N-terminus, the 426-residue chain is MKQDHSAQLYDEAKSLFPGGVSSPVRAIKPFPFFTKSASGSHITDVDGNEYIDCCLAYGPLILGHGHPAVKEAITKQLENGCLYGTPSEIEVKYGKLIQKYYPGMQKLRFVNTGTEATMGAIRAARGFTGRDKIVKIEGGFHGAHDAVLVKAGSGATTIGVPDSLGVPVDVVKNTLQVPYNDIHALEETLEAHKDEIACLIMEPVMGNMGPILPKDMYLRAVRNVTRDYDVLLIFDEVITGFRVSIFGAQGYYGVEPDLTTLGKIAGGGLPIGIFGGRKDIMETVAPQGGVYQAGTYNGNPLSLTAGMATVEVLEKESVHHKVNAKGKALWQSLTDIVRGLRMEGQVTPTGIASMFQLFFGPQPENYEQALKCDKLKFNEFWKHMLQNGVFFPPSQFETNFLSLAHSQADMEQIVTACKKSLAAVK.

Lys-264 carries the post-translational modification N6-(pyridoxal phosphate)lysine.

This sequence belongs to the class-III pyridoxal-phosphate-dependent aminotransferase family. HemL subfamily. The cofactor is pyridoxal 5'-phosphate.

It localises to the cytoplasm. The enzyme catalyses (S)-4-amino-5-oxopentanoate = 5-aminolevulinate. It participates in porphyrin-containing compound metabolism; protoporphyrin-IX biosynthesis; 5-aminolevulinate from L-glutamyl-tRNA(Glu): step 2/2. The protein is Glutamate-1-semialdehyde 2,1-aminomutase of Methanocella arvoryzae (strain DSM 22066 / NBRC 105507 / MRE50).